The sequence spans 438 residues: Coenzyme A disulfide reductase (438 aa).

Position 8–33 (8–33 (GAVAGGATCASQIRRLDKESDIIIFE)) interacts with FAD. The substrate site is built by threonine 15, glutamine 19, arginine 22, serine 39, and asparagine 42. Cysteine 43 acts as the Nucleophile in catalysis. The Redox-active role is filled by cysteine 43. Lysine 71 is a binding site for substrate. Position 151–166 (151–166 (VLVVGAGYVSLEVLEN)) interacts with NADP(+). An FAD-binding site is contributed by 267-277 (TNVPNIYAIGD). Histidine 299 contacts substrate. Tyrosine 419 is a binding site for FAD. Position 427 (lysine 427) interacts with substrate.

This sequence belongs to the class-III pyridine nucleotide-disulfide oxidoreductase family. As to quaternary structure, homodimer. The cofactor is FAD.

The enzyme catalyses NADP(+) + 2 CoA = CoA-disulfide + NADPH + H(+). In terms of biological role, catalyzes specifically the NADPH-dependent reduction of coenzyme A disulfide. In Staphylococcus aureus (strain COL), this protein is Coenzyme A disulfide reductase.